The chain runs to 297 residues: MGFVKVVKNKAYFKRYQVKFRRRREGKTDYYARKRLVIQDKNKYNTPKYRMIVRVTNRDIICQIAYARIEGDMIVCAAYAHELPKYGVKVGLTNYAAAYCTGLLLARRLLNRFGMDKIYEGQVEVTGDEYNVESIDGQPGAFTCYLDAGLARTTTGNKVFGALKGAVDGGLSIPHSTKRFPGYDSESKEFNAEVHRKHIMGQNVADYMRYLMEEDEDAYKKQFSQYIKNNVTPDMMEEMYKKAHAAIRENPVYEKKPKREVKKKRWNRPKMSLAQKKDRVAQKKASFLRAQERAAES.

An N-acetylglycine modification is found at glycine 2. Lysine 5 and lysine 48 each carry N6-acetyllysine. Serine 185 is modified (phosphoserine). An N6-acetyllysine; alternate modification is found at lysine 220. Lysine 220 participates in a covalent cross-link: Glycyl lysine isopeptide (Lys-Gly) (interchain with G-Cter in SUMO1); alternate. Lysine 220 is covalently cross-linked (Glycyl lysine isopeptide (Lys-Gly) (interchain with G-Cter in SUMO2); alternate). The residue at position 232 (threonine 232) is a Phosphothreonine. A disordered region spans residues 253-297; that stretch reads YEKKPKREVKKKRWNRPKMSLAQKKDRVAQKKASFLRAQERAAES. Over residues 258-268 the composition is skewed to basic residues; that stretch reads KREVKKKRWNR. A Phosphoserine modification is found at serine 272.

The protein belongs to the universal ribosomal protein uL18 family. In terms of assembly, component of the large ribosomal subunit (LSU). Part of the 5S RNP complex, which is a LSU subcomplex composed of the 5S RNA, RPL5 and RPL11. Component of a hexameric 5S RNP precursor complex, composed of 5S RNA, RRS1, RPF2/BXDC1, RPL5, RPL11 and HEATR3; this complex acts as a precursor for ribosome assembly. Interacts with isoform 1 of NVL in an ATP-dependent manner. Interacts with RRP1B. Interacts with IPO5, IPO7 and KPNB1; these interactions may be involved in RPL5 nuclear import for the assembly of ribosomal subunits.

It is found in the cytoplasm. The protein localises to the nucleus. Its subcellular location is the nucleolus. Component of the ribosome, a large ribonucleoprotein complex responsible for the synthesis of proteins in the cell. The small ribosomal subunit (SSU) binds messenger RNAs (mRNAs) and translates the encoded message by selecting cognate aminoacyl-transfer RNA (tRNA) molecules. The large subunit (LSU) contains the ribosomal catalytic site termed the peptidyl transferase center (PTC), which catalyzes the formation of peptide bonds, thereby polymerizing the amino acids delivered by tRNAs into a polypeptide chain. The nascent polypeptides leave the ribosome through a tunnel in the LSU and interact with protein factors that function in enzymatic processing, targeting, and the membrane insertion of nascent chains at the exit of the ribosomal tunnel. As part of the 5S RNP/5S ribonucleoprotein particle it is an essential component of the LSU, required for its formation and the maturation of rRNAs. It also couples ribosome biogenesis to p53/TP53 activation. As part of the 5S RNP it accumulates in the nucleoplasm and inhibits MDM2, when ribosome biogenesis is perturbed, mediating the stabilization and the activation of TP53. The polypeptide is Large ribosomal subunit protein uL18 (RPL5) (Oryctolagus cuniculus (Rabbit)).